We begin with the raw amino-acid sequence, 293 residues long: Methylsterol monooxygenase 1 (293 aa).

Transmembrane regions (helical) follow at residues 55-75 (LIVH…FQFI) and 100-120 (VLLF…YYFT). Residues 145-274 (CAVIEDTWHY…FTWWDRIFGT (130 aa)) form the Fatty acid hydroxylase domain. The Histidine box-1 motif lies at 157 to 161 (HRLLH). The short motif at 170–174 (HKIHH) is the Histidine box-2 element. Residues 199–219 (FFIGIMLLCDHVILLWAWVTV) traverse the membrane as a helical segment. Residues 249–255 (HHDFHHM) carry the Histidine box-3 motif.

The protein belongs to the sterol desaturase family. Requires Fe cation as cofactor. Post-translationally, ubiquitinated by MARCHF6, leading to proteasomal degradation.

The protein localises to the endoplasmic reticulum membrane. It catalyses the reaction 4,4-dimethyl-5alpha-cholest-7-en-3beta-ol + 6 Fe(II)-[cytochrome b5] + 3 O2 + 5 H(+) = 4alpha-carboxy-4beta-methyl-5alpha-cholest-7-ene-3beta-ol + 6 Fe(III)-[cytochrome b5] + 4 H2O. The catalysed reaction is 4,4-dimethyl-5alpha-cholesta-8,24-dien-3beta-ol + 6 Fe(II)-[cytochrome b5] + 3 O2 + 5 H(+) = 4beta-methylzymosterol-4alpha-carboxylate + 6 Fe(III)-[cytochrome b5] + 4 H2O. The enzyme catalyses 4alpha-methylzymosterol + 6 Fe(II)-[cytochrome b5] + 3 O2 + 5 H(+) = 4alpha-carboxyzymosterol + 6 Fe(III)-[cytochrome b5] + 4 H2O. It carries out the reaction 4alpha-methyl-5alpha-cholest-7-en-3beta-ol + 6 Fe(II)-[cytochrome b5] + 3 O2 + 5 H(+) = 4alpha-carboxy-5alpha-cholest-7-en-3beta-ol + 6 Fe(III)-[cytochrome b5] + 4 H2O. It catalyses the reaction 4,4-dimethyl-5alpha-cholest-8-en-3beta-ol + 6 Fe(II)-[cytochrome b5] + 3 O2 + 5 H(+) = 4alpha-carboxy-4beta-methyl-5alpha-cholest-8-en-3beta-ol + 6 Fe(III)-[cytochrome b5] + 4 H2O. The catalysed reaction is 4alpha-methyl-5alpha-cholest-8-en-3beta-ol + 6 Fe(II)-[cytochrome b5] + 3 O2 + 5 H(+) = 4alpha-carboxy-5alpha-cholest-8-ene-3beta-ol + 6 Fe(III)-[cytochrome b5] + 4 H2O. It participates in steroid biosynthesis; zymosterol biosynthesis; zymosterol from lanosterol: step 3/6. Its pathway is steroid biosynthesis; cholesterol biosynthesis. Functionally, catalyzes the three-step monooxygenation required for the demethylation of 4,4-dimethyl and 4alpha-methylsterols, which can be subsequently metabolized to cholesterol. This chain is Methylsterol monooxygenase 1 (MSMO1), found in Sus scrofa (Pig).